The following is a 309-amino-acid chain: Tagatose-6-phosphate kinase (309 aa).

It belongs to the carbohydrate kinase PfkB family. LacC subfamily.

The enzyme catalyses D-tagatofuranose 6-phosphate + ATP = D-tagatofuranose 1,6-bisphosphate + ADP + H(+). It participates in carbohydrate metabolism; D-tagatose 6-phosphate degradation; D-glyceraldehyde 3-phosphate and glycerone phosphate from D-tagatose 6-phosphate: step 1/2. The protein is Tagatose-6-phosphate kinase of Streptococcus pneumoniae serotype 4 (strain ATCC BAA-334 / TIGR4).